We begin with the raw amino-acid sequence, 504 residues long: Pre-mRNA-processing factor 19 (504 aa).

N-acetylserine is present on serine 2. Residues 2 to 73 enclose the U-box domain; sequence SLICSISNEV…KPPSATSIPA (72 aa). Residues 68 to 223 are may mediate interaction with PSMC5; that stretch reads ATSIPAILKA…VGLHSASIPG (156 aa). 4 positions are modified to N6-acetyllysine: lysine 122, lysine 179, lysine 244, and lysine 261. One copy of the WD 1 repeat lies at 219–259; the sequence is ASIPGILALDLCPSDTNKILTGGADKNVVVFDKSSEQILAT. WD repeat units follow at residues 262–301, 304–345, 348–387, 390–429, 433–472, and 473–503; these read GHTK…CVQV, AHES…TKVT, TSGC…NVAN, GHSG…NFKT, DNNF…LHFT, and EHSG…KFYS.

It belongs to the WD repeat PRP19 family. As to quaternary structure, homotetramer. Component of activated, catalytic and post-catalytic spliceosomes. Component of the Prp19 complex/PRP19C/Nineteen complex/NTC and related complexes described as PRP19-CDC5L splicing complex and PSO4 complex. A homotetramer of PRPF19, CDC5L, PLRG1 and BCAS2 constitute the core of those complexes. The interaction with CDC5L, PLRG1 and BCAS2 is direct within this core complex. At least three less stably associated proteins CTNNBL1, CWC15 and HSPA8 are found in the Prp19 complex. The Prp19 complex associates with the spliceosome during its assembly and remodeling recruiting additional proteins. Component of the XAB2 complex, a multimeric protein complex composed of XAB2, PRPF19, AQR, ZNF830, ISY1, and PPIE. Interacts with CWC22 and EIF4A3 in an RNA-independent manner. Interacts with RPA1 and RPA2; the PRP19-CDC5L complex is recruited to the sites of DNA repair where it interacts with the replication protein A complex (RPA). Interacts with SETMAR; required for SETMAR recruitment to site of DNA damage. Interacts with U2AF2; the interaction is direct and recruits the Prp19 complex to RNA polymerase II C-terminal domain (CTD) and the pre-mRNA. Interacts with PRPF3. Interacts with APEX1, DNTT and PSMB4. Interacts with PSMC5. Interacts with KNSTRN. Interacts (via N-terminus) with CDC5L. Interacts with KHDC4. Interacts with USB1. Interacts with DDX41. Ubiquitous. Weakly expressed in senescent cells of different tissue origins. Highly expressed in tumor cell lines.

The protein localises to the nucleus. It is found in the nucleoplasm. Its subcellular location is the cytoplasm. The protein resides in the cytoskeleton. It localises to the spindle. The protein localises to the lipid droplet. It carries out the reaction S-ubiquitinyl-[E2 ubiquitin-conjugating enzyme]-L-cysteine + [acceptor protein]-L-lysine = [E2 ubiquitin-conjugating enzyme]-L-cysteine + N(6)-ubiquitinyl-[acceptor protein]-L-lysine.. It participates in protein modification; protein ubiquitination. Its function is as follows. Ubiquitin-protein ligase which is a core component of several complexes mainly involved pre-mRNA splicing and DNA repair. Required for pre-mRNA splicing as component of the spliceosome. Core component of the PRP19C/Prp19 complex/NTC/Nineteen complex which is part of the spliceosome and participates in its assembly, its remodeling and is required for its activity. During assembly of the spliceosome, mediates 'Lys-63'-linked polyubiquitination of the U4 spliceosomal protein PRPF3. Ubiquitination of PRPF3 allows its recognition by the U5 component PRPF8 and stabilizes the U4/U5/U6 tri-snRNP spliceosomal complex. Recruited to RNA polymerase II C-terminal domain (CTD) and the pre-mRNA, it may also couple the transcriptional and spliceosomal machineries. The XAB2 complex, which contains PRPF19, is also involved in pre-mRNA splicing, transcription and transcription-coupled repair. Beside its role in pre-mRNA splicing PRPF19, as part of the PRP19-CDC5L complex, plays a role in the DNA damage response/DDR. It is recruited to the sites of DNA damage by the RPA complex where PRPF19 directly ubiquitinates RPA1 and RPA2. 'Lys-63'-linked polyubiquitination of the RPA complex allows the recruitment of the ATR-ATRIP complex and the activation of ATR, a master regulator of the DNA damage response. May also play a role in DNA double-strand break (DSB) repair by recruiting the repair factor SETMAR to altered DNA. As part of the PSO4 complex may also be involved in the DNA interstrand cross-links/ICLs repair process. In addition, may also mediate 'Lys-48'-linked polyubiquitination of substrates and play a role in proteasomal degradation. May play a role in the biogenesis of lipid droplets. May play a role in neural differentiation possibly through its function as part of the spliceosome. This chain is Pre-mRNA-processing factor 19, found in Homo sapiens (Human).